Reading from the N-terminus, the 283-residue chain is Urease accessory protein UreD 2 (283 aa).

The segment covering 1–11 (MGRRAPDRLDR) has biased composition (basic and acidic residues). Positions 1–30 (MGRRAPDRLDRGVTTTSPRTQAPPQAGRGV) are disordered. The span at 13–23 (VTTTSPRTQAP) shows a compositional bias: polar residues.

This sequence belongs to the UreD family. UreD, UreF and UreG form a complex that acts as a GTP-hydrolysis-dependent molecular chaperone, activating the urease apoprotein by helping to assemble the nickel containing metallocenter of UreC. The UreE protein probably delivers the nickel.

It is found in the cytoplasm. Functionally, required for maturation of urease via the functional incorporation of the urease nickel metallocenter. This chain is Urease accessory protein UreD 2, found in Saccharopolyspora erythraea (strain ATCC 11635 / DSM 40517 / JCM 4748 / NBRC 13426 / NCIMB 8594 / NRRL 2338).